Consider the following 168-residue polypeptide: MKSLNRQTVSMFKKLSVPAAIMMILSTIISGIGTFLHYKEELMPSACANGWIQYDKHCYLDTNIKMSTDNAVYQCRKLRARLPRPDTRHLRVLFSIFYKDYWVSLKKTNNKWLDINNDKDIDISKLTNFKQLNSTTDAEACYIYKSGKLVKTVCKSTQSVLCVKKFYK.

The Intravirion portion of the chain corresponds to 1 to 14 (MKSLNRQTVSMFKK). The chain crosses the membrane as a helical span at residues 15 to 37 (LSVPAAIMMILSTIISGIGTFLH). Over 38-168 (YKEELMPSAC…SVLCVKKFYK (131 aa)) the chain is Virion surface. Residues 54-163 (YDKHCYLDTN…CKSTQSVLCV (110 aa)) form the C-type lectin domain. Disulfide bonds link Cys-75-Cys-162 and Cys-141-Cys-154. The N-linked (GlcNAc...) asparagine; by host glycan is linked to Asn-133.

The protein belongs to the orthopoxvirus OPG162 protein family. Interacts with protein OPG161. Interacts with protein OPG164. Interacts with protein OPG190.

The protein resides in the virion membrane. Its subcellular location is the host Golgi apparatus. Its function is as follows. Forms a complex with OPG162 and OPG190 to coordinate the incorporation of OPG164 into wrapped enveloped virion (EV) membranes and, subsequently, the production of actin tails. Therefore plays an essential role in efficient cell-to-cell spread of viral particles. The chain is Protein OPG162 (OPG162) from Homo sapiens (Human).